The chain runs to 548 residues: Uridine-cytidine kinase-like 1 (548 aa).

Residues Met1 to Ala18 are compositionally biased toward low complexity. Residues Met1–Thr74 are disordered. Phosphoserine is present on residues Ser56 and Ser63. An ATP-binding site is contributed by Gly105–Thr112. Position 539 is a phosphoserine (Ser539).

The protein belongs to the uridine kinase family. In terms of assembly, interacts with RNF19B. Ubiquitinated by RNF19B; which induces proteasomal degradation.

It localises to the cytoplasm. It is found in the nucleus. It carries out the reaction uridine + ATP = UMP + ADP + H(+). The enzyme catalyses cytidine + ATP = CMP + ADP + H(+). The protein operates within pyrimidine metabolism; UMP biosynthesis via salvage pathway; UMP from uridine: step 1/1. May contribute to UTP accumulation needed for blast transformation and proliferation. In Mus musculus (Mouse), this protein is Uridine-cytidine kinase-like 1 (Uckl1).